We begin with the raw amino-acid sequence, 486 residues long: Cardiolipin synthase A (486 aa).

2 consecutive transmembrane segments (helical) span residues 3 to 23 (TFYTVISWLLVFGYWLLIAGV) and 38 to 58 (MAWLLVIYILPLVGIVAYLSF). PLD phosphodiesterase domains lie at 219 to 246 (MDLRQHRKIILIDNRIAYTGSMNMVDPR) and 399 to 426 (KDGLLHTKSVLVDGQLSLVGTVNLDMRS). Residues His224, Lys226, Asp231, His404, Lys406, and Asp411 contribute to the active site.

The protein belongs to the phospholipase D family. Cardiolipin synthase subfamily. ClsA sub-subfamily.

Its subcellular location is the cell inner membrane. It carries out the reaction 2 a 1,2-diacyl-sn-glycero-3-phospho-(1'-sn-glycerol) = a cardiolipin + glycerol. Catalyzes the reversible phosphatidyl group transfer from one phosphatidylglycerol molecule to another to form cardiolipin (CL) (diphosphatidylglycerol) and glycerol. The protein is Cardiolipin synthase A of Pectobacterium carotovorum subsp. carotovorum (strain PC1).